Consider the following 360-residue polypeptide: Small ribosomal subunit protein mS22 (360 aa).

Ser-54 is subject to Phosphoserine. Lys-211 is modified (N6-acetyllysine).

Belongs to the mitochondrion-specific ribosomal protein mS22 family. As to quaternary structure, component of the mitochondrial small ribosomal subunit (mt-SSU). Mature mammalian 55S mitochondrial ribosomes consist of a small (28S) and a large (39S) subunit. The 28S small subunit contains a 12S ribosomal RNA (12S mt-rRNA) and 30 different proteins. The 39S large subunit contains a 16S rRNA (16S mt-rRNA), a copy of mitochondrial valine transfer RNA (mt-tRNA(Val)), which plays an integral structural role, and 52 different proteins.

The protein resides in the mitochondrion. The chain is Small ribosomal subunit protein mS22 (MRPS22) from Homo sapiens (Human).